Reading from the N-terminus, the 1122-residue chain is Maestro heat-like repeat-containing protein family member 7 (1122 aa).

Disordered stretches follow at residues 1-144 (MALS…LSED) and 183-203 (SHTISRQSSQTPLLLPSNTSL). Residues 33-65 (TTPRPTPDLTLAPLPAHGVALAPALHPALSPDP) are compositionally biased toward low complexity. Polar residues-rich tracts occupy residues 75-95 (DISNPNASGAATPSSIQINTA), 120-136 (PVPSLSSTQATVLSPEN), and 184-203 (HTISRQSSQTPLLLPSNTSL). Residues N200, N210, N255, N267, and N296 are each glycosylated (N-linked (GlcNAc...) asparagine). Residues 246–265 (WNTGSKGSVNVTSNSQPRSG) are disordered. A Phosphoserine modification is found at S356. Residues 363–385 (FRSPPEGTSEDAKANESEKRDHD) form a disordered region. Over residues 372–385 (EDAKANESEKRDHD) the composition is skewed to basic and acidic residues. N-linked (GlcNAc...) asparagine glycans are attached at residues N541 and N546. A run of 2 helical transmembrane segments spans residues 548-568 (TLVTLPFFVSSGFPTLGLLLG) and 722-742 (LLPISFLASSFMTEVVVALLM). HEAT repeat units lie at residues 913-950 (QELCRILYLLIPLLERGDERHKITATAFFVELFRMEQV), 992-1029 (TKVQGLLPSMVKSLKNMDGVLVMEAVHDLKTIFKGQAK), 1035-1072 (SVYIEMLQTLLPHFIDARETVRTSCINTYGKVVKKLRM), and 1080-1117 (EQLTSTLMPLLFIIQEGNAKVSQHFPLEFHTAGIFFLL).

The protein resides in the membrane. The sequence is that of Maestro heat-like repeat-containing protein family member 7 (Mroh7) from Rattus norvegicus (Rat).